A 92-amino-acid polypeptide reads, in one-letter code: Cell division topological specificity factor (92 aa).

Belongs to the MinE family.

Functionally, prevents the cell division inhibition by proteins MinC and MinD at internal division sites while permitting inhibition at polar sites. This ensures cell division at the proper site by restricting the formation of a division septum at the midpoint of the long axis of the cell. This chain is Cell division topological specificity factor, found in Desulforamulus reducens (strain ATCC BAA-1160 / DSM 100696 / MI-1) (Desulfotomaculum reducens).